A 466-amino-acid polypeptide reads, in one-letter code: UPF0652 protein C16A11.03c (466 aa).

The protein belongs to the UPF0652 family.

The protein localises to the cytoplasm. Its subcellular location is the nucleus. This Schizosaccharomyces pombe (strain 972 / ATCC 24843) (Fission yeast) protein is UPF0652 protein C16A11.03c.